The chain runs to 345 residues: Probable S-adenosylmethionine carrier 2, chloroplastic (345 aa).

The transit peptide at 1–31 (MTKALSGFCCSLSLSTLVRSSSSHMDSDIVS) directs the protein to the chloroplast. Solcar repeat units lie at residues 76–148 (RVLY…TKQK), 157–239 (LSAV…LRIG), and 252–334 (ENAM…TKQI). Helical transmembrane passes span 82–102 (LITG…IDTI), 121–141 (YSGL…FFGV), 156–176 (NLSA…SSIV), 254–274 (AMIG…LDVI), and 309–329 (GMGP…GVLE).

This sequence belongs to the mitochondrial carrier (TC 2.A.29) family. Expressed at low levels in seedlings, leaves, flowers, stems and roots.

The protein resides in the plastid. The protein localises to the chloroplast membrane. In terms of biological role, probable S-adenosylmethionine (SAM) transporter able to catalyze both uniport and exchange reactions through membranes. The protein is Probable S-adenosylmethionine carrier 2, chloroplastic (SAMC2) of Arabidopsis thaliana (Mouse-ear cress).